A 155-amino-acid chain; its full sequence is 3-hydroxyacyl-[acyl-carrier-protein] dehydratase FabZ (155 aa).

Residue H58 is part of the active site.

The protein belongs to the thioester dehydratase family. FabZ subfamily.

It localises to the cytoplasm. The catalysed reaction is a (3R)-hydroxyacyl-[ACP] = a (2E)-enoyl-[ACP] + H2O. Functionally, involved in unsaturated fatty acids biosynthesis. Catalyzes the dehydration of short chain beta-hydroxyacyl-ACPs and long chain saturated and unsaturated beta-hydroxyacyl-ACPs. The protein is 3-hydroxyacyl-[acyl-carrier-protein] dehydratase FabZ of Alkalilimnicola ehrlichii (strain ATCC BAA-1101 / DSM 17681 / MLHE-1).